The sequence spans 429 residues: Serine--tRNA ligase (429 aa).

An L-serine-binding site is contributed by T235–E237. R266–E268 is a binding site for ATP. Position 289 (E289) interacts with L-serine. Residue E353–S356 participates in ATP binding. Position 389 (S389) interacts with L-serine.

This sequence belongs to the class-II aminoacyl-tRNA synthetase family. Type-1 seryl-tRNA synthetase subfamily. In terms of assembly, homodimer. The tRNA molecule binds across the dimer.

The protein resides in the cytoplasm. The catalysed reaction is tRNA(Ser) + L-serine + ATP = L-seryl-tRNA(Ser) + AMP + diphosphate + H(+). It carries out the reaction tRNA(Sec) + L-serine + ATP = L-seryl-tRNA(Sec) + AMP + diphosphate + H(+). The protein operates within aminoacyl-tRNA biosynthesis; selenocysteinyl-tRNA(Sec) biosynthesis; L-seryl-tRNA(Sec) from L-serine and tRNA(Sec): step 1/1. Functionally, catalyzes the attachment of serine to tRNA(Ser). Is also able to aminoacylate tRNA(Sec) with serine, to form the misacylated tRNA L-seryl-tRNA(Sec), which will be further converted into selenocysteinyl-tRNA(Sec). In Haemophilus influenzae (strain PittGG), this protein is Serine--tRNA ligase.